The primary structure comprises 218 residues: Ras-related protein Rab-42 (218 aa).

Residues alanine 19, glycine 21, lysine 22, threonine 23, and threonine 46 each coordinate GTP. Threonine 23, threonine 46, and aspartate 70 together coordinate Mg(2+). 5 residues coordinate GTP: glycine 73, lysine 130, aspartate 132, valine 160, and lysine 161. S-geranylgeranyl cysteine attachment occurs at residues cysteine 216 and cysteine 218.

Belongs to the small GTPase superfamily. Rab family. Mg(2+) serves as cofactor.

The protein localises to the membrane. The enzyme catalyses GTP + H2O = GDP + phosphate + H(+). Regulated by guanine nucleotide exchange factors (GEFs) which promote the exchange of bound GDP for free GTP. Regulated by GTPase activating proteins (GAPs) which increase the GTP hydrolysis activity. Inhibited by GDP dissociation inhibitors (GDIs). Its function is as follows. The small GTPases Rab are key regulators of intracellular membrane trafficking, from the formation of transport vesicles to their fusion with membranes. Rabs cycle between an inactive GDP-bound form and an active GTP-bound form that is able to recruit to membranes different sets of downstream effectors directly responsible for vesicle formation, movement, tethering and fusion. The physiological function of RAB42 remains undefined. This Homo sapiens (Human) protein is Ras-related protein Rab-42.